The following is a 476-amino-acid chain: Aspartyl/glutamyl-tRNA(Asn/Gln) amidotransferase subunit B (476 aa).

Belongs to the GatB/GatE family. GatB subfamily. Heterotrimer of A, B and C subunits.

It carries out the reaction L-glutamyl-tRNA(Gln) + L-glutamine + ATP + H2O = L-glutaminyl-tRNA(Gln) + L-glutamate + ADP + phosphate + H(+). The enzyme catalyses L-aspartyl-tRNA(Asn) + L-glutamine + ATP + H2O = L-asparaginyl-tRNA(Asn) + L-glutamate + ADP + phosphate + 2 H(+). Its function is as follows. Allows the formation of correctly charged Asn-tRNA(Asn) or Gln-tRNA(Gln) through the transamidation of misacylated Asp-tRNA(Asn) or Glu-tRNA(Gln) in organisms which lack either or both of asparaginyl-tRNA or glutaminyl-tRNA synthetases. The reaction takes place in the presence of glutamine and ATP through an activated phospho-Asp-tRNA(Asn) or phospho-Glu-tRNA(Gln). The sequence is that of Aspartyl/glutamyl-tRNA(Asn/Gln) amidotransferase subunit B from Albidiferax ferrireducens (strain ATCC BAA-621 / DSM 15236 / T118) (Rhodoferax ferrireducens).